A 304-amino-acid chain; its full sequence is Thyroxine 5-deiodinase (304 aa).

The segment at 1 to 23 is disordered; it reads MPRQATSRLVVGEGEGSQGASGP. The Cytoplasmic segment spans residues 1 to 44; that stretch reads MPRQATSRLVVGEGEGSQGASGPAATMLRSLLLHSLRLCAQTAS. The chain crosses the membrane as a helical; Signal-anchor for type II membrane protein span at residues 45 to 67; sequence CLVLFPRFLGTAFMLWLLDFLCI. At 68–304 the chain is on the extracellular side; that stretch reads RKHFLGRRRR…QLHGARPRRV (237 aa). A disordered region spans residues 78 to 99; it reads GQPEPEVELNSEGEEVPPDDPP. Residues 82–95 show a composition bias toward acidic residues; the sequence is PEVELNSEGEEVPP. Sec-170 is an active-site residue. Sec-170 is a non-standard amino acid (selenocysteine).

It belongs to the iodothyronine deiodinase family. Monomer. Homodimer. May undergo minor heretodimerization with DIO1 and DIO2. As to expression, expressed in placenta and several fetal tissues.

It localises to the cell membrane. Its subcellular location is the endosome membrane. It carries out the reaction 3,3',5'-triiodo-L-thyronine + iodide + A + H(+) = L-thyroxine + AH2. The enzyme catalyses 3,3'-diiodo-L-thyronine + iodide + A + H(+) = 3,3',5-triiodo-L-thyronine + AH2. It catalyses the reaction 3-iodo-L-thyronine + iodide + A + H(+) = 3,5-diiodo-L-thyronine + AH2. The catalysed reaction is L-thyronine + iodide + A + H(+) = 3-iodo-L-thyronine + AH2. It carries out the reaction 3',5'-diiodo-L-thyronine + iodide + A + H(+) = 3,3',5'-triiodo-L-thyronine + AH2. The enzyme catalyses 3'-iodo-L-thyronine + iodide + A + H(+) = 3,3'-diiodo-L-thyronine + AH2. It catalyses the reaction 3,3',5'-triiodothyronamine + iodide + A + H(+) = 3,3',5,5'-tetraiodothyronamine + AH2. The catalysed reaction is 3',5'-diiodothyronamine + iodide + A + H(+) = 3,3',5'-triiodothyronamine + AH2. It carries out the reaction 3,3'-diiodothyronamine + iodide + A + H(+) = 3,3',5-triiodothyronamine + AH2. The enzyme catalyses 3-iodothyronamine + iodide + A + H(+) = 3,5-diiodothyronamine + AH2. It catalyses the reaction 3'-iodothyronamine + iodide + A + H(+) = 3,3'-diiodothyronamine + AH2. The catalysed reaction is thyronamine + iodide + A + H(+) = 3-iodothyronamine + AH2. Functionally, plays a crucial role in the metabolism of thyroid hormones (TH) and has specific roles in TH activation and inactivation by deiodination. Catalyzes the deiodination of L-thyroxine (T4) to 3,3',5'-triiodothyronine (rT3), 3,5,3'-triiodothyronine (T3) to 3,3'-diiodothyronine (3,3'-T2), 3,5-diiodothyronine (3,5-T2) to 3-monoiodothyronine (3-T1), rT3 to 3',5'-diiodothyronine (3',5'-T2) and 3,3'-T2 to 3'-monoiodothyronine (3'-T1) via inner-ring deiodination (IRD). Catalyzes the deiodination of 3-T1 to L-thyronine (T0) via outer-ring deiodination (ORD). Catalyzes the tyrosyl ring deiodinations of 3,3',5,5'-tetraiodothyronamine, 3,3',5'-triiodothyronamine, 3,5,3'-triiodothyronamine, 3,5-diiodothyronamine, 3,3'-diiodothyronamine and 3-iodothyronamine. The polypeptide is Thyroxine 5-deiodinase (DIO3) (Homo sapiens (Human)).